Here is a 183-residue protein sequence, read N- to C-terminus: Probable GTP-binding protein EngB (183 aa).

An EngB-type G domain is found at 17 to 183 (DYPEVVFVGR…KKELLSRILN (167 aa)). GTP-binding positions include 25–32 (GRSNVGKS), 51–55 (GRTRA), 69–72 (DVPG), 137–140 (TKID), and 166–168 (SSA). The Mg(2+) site is built by S32 and T53.

Belongs to the TRAFAC class TrmE-Era-EngA-EngB-Septin-like GTPase superfamily. EngB GTPase family. The cofactor is Mg(2+).

Functionally, necessary for normal cell division and for the maintenance of normal septation. This chain is Probable GTP-binding protein EngB, found in Aquifex aeolicus (strain VF5).